Reading from the N-terminus, the 677-residue chain is MTQVAKKILVTCALPYANGSIHLGHMLEHIQADVWVRYQRMRGHEVNFICADDAHGTPIMLKAQQLGITPEQMIGEMSQEHQTDFAGFNISYDNYHSTHSDENRELSELIYTRLKENGFIKNRTISQLYDPEKGMFLPDRFVKGTCPKCKSADQYGDNCEVCGATYSPTELIEPKSVVSGATPVMRDSEHFFFDLPSFSEMLQAWTRSGALQEQVANKMQEWFESGLQQWDISRDAPYFGFEIPNAPGKYFYVWLDAPIGYMGSFKNLCDKRGDTTSFDEYWKKDSDAELYHFIGKDIVYFHSLFWPAMLEGSHFRKPTNLFVHGYVTVNGAKMSKSRGTFIKASTWLKHFDADSLRYYYTAKLSSRIDDIDLNLEDFVQRVNADIVNKVVNLASRNAGFINKRFDGVLAAELADPQLYKTFTDAAAVIGEAWESREFGKAIREIMALADVANRYVDEQAPWVVAKQEGRDADLQAICSMGINLFRVLMTYLKPVLPTLSERVEAFLNSELNWDAIEQPLLSHKVNTFKALYNRIDMKQVEALVEASKEEVKAAAAPVTGPLADFPIQETITFDDFAKIDLRVALIENAEFVDGSDKLLRLTLDLGGEKRNVFSGIRSAYPDPQALIGRQTVMVANLAPRKMRFGVSEGMVMAAGPGGKDIFLLSPDDGAKPGQQVK.

Residues 15–25 carry the 'HIGH' region motif; it reads PYANGSIHLGH. Cys-146, Cys-149, Cys-159, and Cys-162 together coordinate Zn(2+). The 'KMSKS' region motif lies at 333-337; that stretch reads KMSKS. ATP is bound at residue Lys-336. The region spanning 575-677 is the tRNA-binding domain; that stretch reads DFAKIDLRVA…DGAKPGQQVK (103 aa).

This sequence belongs to the class-I aminoacyl-tRNA synthetase family. MetG type 1 subfamily. Homodimer. Requires Zn(2+) as cofactor.

It localises to the cytoplasm. It carries out the reaction tRNA(Met) + L-methionine + ATP = L-methionyl-tRNA(Met) + AMP + diphosphate. Functionally, is required not only for elongation of protein synthesis but also for the initiation of all mRNA translation through initiator tRNA(fMet) aminoacylation. The protein is Methionine--tRNA ligase of Salmonella typhi.